The primary structure comprises 146 residues: Phospholipase A2, membrane associated (146 aa).

The first 21 residues, 1–21, serve as a signal peptide directing secretion; that stretch reads MKVLLLLAASIMAFGSIQVQG. Cystine bridges form between C47/C139, C49/C65, C64/C119, C70/C146, C71/C112, C80/C105, and C98/C110. Ca(2+) is bound by residues H48, G50, and G52. H68 is a catalytic residue. D69 serves as a coordination point for Ca(2+). D113 is a catalytic residue.

This sequence belongs to the phospholipase A2 family. Requires Ca(2+) as cofactor. As to expression, mainly in the Paneth cells adjacent to the stem population in the small intestines.

It localises to the secreted. The protein resides in the cell membrane. It is found in the mitochondrion outer membrane. It carries out the reaction a 1,2-diacyl-sn-glycero-3-phosphoethanolamine + H2O = a 1-acyl-sn-glycero-3-phosphoethanolamine + a fatty acid + H(+). The enzyme catalyses 1-hexadecanoyl-2-(9Z-octadecenoyl)-sn-glycero-3-phosphoethanolamine + H2O = 1-hexadecanoyl-sn-glycero-3-phosphoethanolamine + (9Z)-octadecenoate + H(+). It catalyses the reaction 1-hexadecanoyl-2-(9Z,12Z-octadecadienoyl)-sn-glycero-3-phosphoethanolamine + H2O = 1-hexadecanoyl-sn-glycero-3-phosphoethanolamine + (9Z,12Z)-octadecadienoate + H(+). The catalysed reaction is 1-hexadecanoyl-2-(5Z,8Z,11Z,14Z-eicosatetraenoyl)-sn-glycero-3-phosphoethanolamine + H2O = 1-hexadecanoyl-sn-glycero-3-phosphoethanolamine + (5Z,8Z,11Z,14Z)-eicosatetraenoate + H(+). It carries out the reaction N-hexadecanoyl-1,2-di-(9Z-octadecenoyl)-sn-glycero-3-phosphoethanolamine + H2O = N-hexadecanoyl-1-(9Z-octadecenoyl)-sn-glycero-3-phosphoethanolamine + (9Z)-octadecenoate + H(+). The enzyme catalyses 1,2-dihexadecanoyl-sn-glycero-3-phospho-(1'-sn-glycerol) + H2O = 1-hexadecanoyl-sn-glycero-3-phospho-(1'-sn-glycerol) + hexadecanoate + H(+). It catalyses the reaction 1-hexadecanoyl-2-(9Z-octadecenoyl)-sn-glycero-3-phosphoglycerol + H2O = 1-hexadecanoyl-sn-glycero-3-phosphoglycerol + (9Z)-octadecenoate + H(+). The catalysed reaction is 1-hexadecanoyl-2-(9Z-octadecenoyl)-sn-glycero-3-phospho-(1'-sn-glycerol) + H2O = 1-hexadecanoyl-sn-glycero-3-phospho-(1'-sn-glycerol) + (9Z)-octadecenoate + H(+). It carries out the reaction a 1,2-diacyl-sn-glycero-3-phosphocholine + H2O = a 1-acyl-sn-glycero-3-phosphocholine + a fatty acid + H(+). The enzyme catalyses 1,2-dihexadecanoyl-sn-glycero-3-phosphocholine + H2O = 1-hexadecanoyl-sn-glycero-3-phosphocholine + hexadecanoate + H(+). It catalyses the reaction 1-hexadecanoyl-2-(9Z-octadecenoyl)-sn-glycero-3-phosphocholine + H2O = 1-hexadecanoyl-sn-glycero-3-phosphocholine + (9Z)-octadecenoate + H(+). The catalysed reaction is 1-hexadecanoyl-2-(9Z,12Z-octadecadienoyl)-sn-glycero-3-phosphocholine + H2O = (9Z,12Z)-octadecadienoate + 1-hexadecanoyl-sn-glycero-3-phosphocholine + H(+). It carries out the reaction 1-hexadecanoyl-2-(4Z,7Z,10Z,13Z,16Z,19Z-docosahexaenoyl)-sn-glycero-3-phosphocholine + H2O = (4Z,7Z,10Z,13Z,16Z,19Z)-docosahexaenoate + 1-hexadecanoyl-sn-glycero-3-phosphocholine + H(+). Its function is as follows. Secretory calcium-dependent phospholipase A2 that primarily targets extracellular phospholipids with implications in host antimicrobial defense, inflammatory response and tissue regeneration. Hydrolyzes the ester bond of the fatty acyl group attached at sn-2 position of phospholipids (phospholipase A2 activity) with preference for phosphatidylethanolamines and phosphatidylglycerols over phosphatidylcholines. Contributes to lipid remodeling of cellular membranes and generation of lipid mediators involved in pathogen clearance. Displays bactericidal activity against Gram-positive bacteria by directly hydrolyzing phospholipids of the bacterial membrane. Upon sterile inflammation, targets membrane phospholipids of extracellular mitochondria released from activated platelets, generating free unsaturated fatty acids such as arachidonate that is used by neighboring leukocytes to synthesize inflammatory eicosanoids such as leukotrienes. Simultaneously, by compromising mitochondrial membrane integrity, promotes the release in circulation of potent damage-associated molecular pattern molecules that activate the innate immune response. Plays a stem cell regulator role in the intestinal crypt. Within intracellular compartment mediates Paneth cell differentiation and its stem cell supporting functions by inhibiting Wnt signaling pathway in intestinal stem cell (ICS). Secreted in the intestinal lumen upon inflammation, acts in an autocrine way and promotes prostaglandin E2 synthesis that stimulates Wnt signaling pathway in ICS cells and tissue regeneration. May play a role in the biosynthesis of N-acyl ethanolamines that regulate energy metabolism and inflammation. Hydrolyzes N-acyl phosphatidylethanolamines to N-acyl lysophosphatidylethanolamines, which are further cleaved by a lysophospholipase D to release N-acyl ethanolamines. Independent of its catalytic activity, acts as a ligand for integrins. Binds to and activates integrins ITGAV:ITGB3, ITGA4:ITGB1 and ITGA5:ITGB1. Binds to a site (site 2) which is distinct from the classical ligand-binding site (site 1) and induces integrin conformational changes and enhanced ligand binding to site 1. Induces cell proliferation in an integrin-dependent manner. The protein is Phospholipase A2, membrane associated (Pla2g2a) of Mus musculus (Mouse).